Consider the following 350-residue polypeptide: Uroporphyrinogen decarboxylase (350 aa).

Substrate is bound by residues 23-27 (RQAGR), aspartate 72, tyrosine 149, serine 204, and histidine 318.

It belongs to the uroporphyrinogen decarboxylase family. In terms of assembly, homodimer.

It is found in the cytoplasm. It catalyses the reaction uroporphyrinogen III + 4 H(+) = coproporphyrinogen III + 4 CO2. Its pathway is porphyrin-containing compound metabolism; protoporphyrin-IX biosynthesis; coproporphyrinogen-III from 5-aminolevulinate: step 4/4. In terms of biological role, catalyzes the decarboxylation of four acetate groups of uroporphyrinogen-III to yield coproporphyrinogen-III. This Carboxydothermus hydrogenoformans (strain ATCC BAA-161 / DSM 6008 / Z-2901) protein is Uroporphyrinogen decarboxylase.